Here is an 88-residue protein sequence, read N- to C-terminus: UPF0250 protein Sfri_0694 (88 aa).

Belongs to the UPF0250 family.

In Shewanella frigidimarina (strain NCIMB 400), this protein is UPF0250 protein Sfri_0694.